The sequence spans 280 residues: Large ribosomal subunit protein uL2 (280 aa).

Positions 226–280 (NPIDHPHGGGEGRTSGGRHPVTPWGKPTKGAKTRNKKKASSQLIIRSRHAKKKGR) are disordered. Composition is skewed to basic residues over residues 254–264 (KGAKTRNKKKA) and 271–280 (RSRHAKKKGR).

It belongs to the universal ribosomal protein uL2 family. As to quaternary structure, part of the 50S ribosomal subunit. Forms a bridge to the 30S subunit in the 70S ribosome.

Its function is as follows. One of the primary rRNA binding proteins. Required for association of the 30S and 50S subunits to form the 70S ribosome, for tRNA binding and peptide bond formation. It has been suggested to have peptidyltransferase activity; this is somewhat controversial. Makes several contacts with the 16S rRNA in the 70S ribosome. This chain is Large ribosomal subunit protein uL2, found in Roseobacter denitrificans (strain ATCC 33942 / OCh 114) (Erythrobacter sp. (strain OCh 114)).